Here is a 268-residue protein sequence, read N- to C-terminus: Tropinone reductase homolog At2g29150 (268 aa).

Residue L22–H46 participates in NADP(+) binding. S155 provides a ligand contact to substrate. Y167 (proton acceptor) is an active-site residue.

Belongs to the short-chain dehydrogenases/reductases (SDR) family. SDR65C subfamily.

Functionally, enantiospecific reductase active on cyclic monoterpenes and small flexible lipophilic carbonyls. No activity with tropinone, nitrogen-containing tropinone analogs, tropine or pseudotropine as substrate. The polypeptide is Tropinone reductase homolog At2g29150 (Arabidopsis thaliana (Mouse-ear cress)).